The primary structure comprises 248 residues: tRNA uridine(34) hydroxylase (248 aa).

One can recognise a Rhodanese domain in the interval 128–222; sequence EGRPVVMLDT…YFEEVGGAHY (95 aa). The active-site Cysteine persulfide intermediate is Cys-182.

Belongs to the TrhO family.

The catalysed reaction is uridine(34) in tRNA + AH2 + O2 = 5-hydroxyuridine(34) in tRNA + A + H2O. Its function is as follows. Catalyzes oxygen-dependent 5-hydroxyuridine (ho5U) modification at position 34 in tRNAs. This chain is tRNA uridine(34) hydroxylase, found in Thiobacillus denitrificans (strain ATCC 25259 / T1).